The sequence spans 404 residues: Formate-dependent phosphoribosylglycinamide formyltransferase (404 aa).

Residues 25 to 26 (EL) and E85 each bind N(1)-(5-phospho-beta-D-ribosyl)glycinamide. Residues R118, K159, 164-169 (SSGKGQ), 199-202 (EGFI), and E207 contribute to the ATP site. The ATP-grasp domain occupies 123-318 (RLAAEELGLP…EFELHARAIL (196 aa)). Residues E277 and E289 each coordinate Mg(2+). N(1)-(5-phospho-beta-D-ribosyl)glycinamide contacts are provided by residues D296, K365, and 372-373 (RR).

Belongs to the PurK/PurT family. In terms of assembly, homodimer.

The enzyme catalyses N(1)-(5-phospho-beta-D-ribosyl)glycinamide + formate + ATP = N(2)-formyl-N(1)-(5-phospho-beta-D-ribosyl)glycinamide + ADP + phosphate + H(+). It participates in purine metabolism; IMP biosynthesis via de novo pathway; N(2)-formyl-N(1)-(5-phospho-D-ribosyl)glycinamide from N(1)-(5-phospho-D-ribosyl)glycinamide (formate route): step 1/1. Functionally, involved in the de novo purine biosynthesis. Catalyzes the transfer of formate to 5-phospho-ribosyl-glycinamide (GAR), producing 5-phospho-ribosyl-N-formylglycinamide (FGAR). Formate is provided by PurU via hydrolysis of 10-formyl-tetrahydrofolate. In Burkholderia lata (strain ATCC 17760 / DSM 23089 / LMG 22485 / NCIMB 9086 / R18194 / 383), this protein is Formate-dependent phosphoribosylglycinamide formyltransferase.